Reading from the N-terminus, the 104-residue chain is Urease subunit beta (104 aa).

It belongs to the urease beta subunit family. Heterotrimer of UreA (gamma), UreB (beta) and UreC (alpha) subunits. Three heterotrimers associate to form the active enzyme.

The protein localises to the cytoplasm. It carries out the reaction urea + 2 H2O + H(+) = hydrogencarbonate + 2 NH4(+). It functions in the pathway nitrogen metabolism; urea degradation; CO(2) and NH(3) from urea (urease route): step 1/1. The polypeptide is Urease subunit beta (Mycobacterium bovis (strain BCG / Pasteur 1173P2)).